The chain runs to 446 residues: Tripartite motif-containing protein 43C (446 aa).

The segment at 16-57 (CSICQGIFMDPVYLRCGHKFCETCLLLFQEDIKFPAYCPTCR) adopts an RING-type zinc-finger fold. Residues 88–129 (SEEHKCVTHKAKKMIFCDKSKILLCHLCSDSQEHSGHTHCSI) form a B box-type zinc finger. Positions 93, 96, 115, and 121 each coordinate Zn(2+). Positions 271–446 (RLRAHSIPGL…VRPFFFAAYT (176 aa)) constitute a B30.2/SPRY domain.

This sequence belongs to the TRIM/RBCC family.

This chain is Tripartite motif-containing protein 43C, found in Mus musculus (Mouse).